Here is a 332-residue protein sequence, read N- to C-terminus: 2,3-diketo-L-gulonate reductase (332 aa).

The active-site Proton donor is the His-44. NAD(+) is bound by residues 168–174 (ITMVDMS), 224–225 (WK), and 304–306 (GHE).

Belongs to the LDH2/MDH2 oxidoreductase family. DlgD subfamily. In terms of assembly, homodimer.

Its subcellular location is the cytoplasm. The enzyme catalyses 3-dehydro-L-gulonate + NAD(+) = 2,3-dioxo-L-gulonate + NADH + H(+). It carries out the reaction 3-dehydro-L-gulonate + NADP(+) = 2,3-dioxo-L-gulonate + NADPH + H(+). Catalyzes the reduction of 2,3-diketo-L-gulonate in the presence of NADH, to form 3-keto-L-gulonate. The sequence is that of 2,3-diketo-L-gulonate reductase from Salmonella newport (strain SL254).